A 146-amino-acid polypeptide reads, in one-letter code: Interleukin-13 (146 aa).

The N-terminal stretch at methionine 1–alanine 24 is a signal peptide. Asparagine 52, asparagine 63, asparagine 71, and asparagine 86 each carry an N-linked (GlcNAc...) asparagine glycan. Intrachain disulfides connect cysteine 62–cysteine 90 and cysteine 78–cysteine 104.

This sequence belongs to the IL-4/IL-13 family. In terms of assembly, interacts with IL13RA2.

Its subcellular location is the secreted. Cytokine that plays important roles in allergic inflammation and immune response to parasite infection. Synergizes with IL2 in regulating interferon-gamma synthesis. Stimulates B-cell proliferation, and activation of eosinophils, basophils, and mast cells. Plays an important role in controlling IL33 activity by modulating the production of transmembrane and soluble forms of interleukin-1 receptor-like 1/IL1RL1. Displays the capacity to antagonize Th1-driven proinflammatory immune response and downregulates synthesis of many proinflammatory cytokines including IL1, IL6, IL10, IL12 and TNF-alpha through a mechanism that partially involves suppression of NF-kappa-B. Also functions on nonhematopoietic cells, including endothelial cells where it induces vascular cell adhesion protein 1/VCAM1, which is important in the recruitment of eosinophils. Exerts its biological effects through its receptors which comprises the IL4R chain and the IL13RA1 chain, to activate JAK1 and TYK2, leading to the activation of STAT6. Aside from IL13RA1, another receptor IL13RA2 acts as a high affinity decoy for IL13 and mediates internalization and depletion of extracellular IL13. This is Interleukin-13 (IL13) from Homo sapiens (Human).